The following is a 130-amino-acid chain: Small ribosomal subunit protein uS11 (130 aa).

The protein belongs to the universal ribosomal protein uS11 family. Part of the 30S ribosomal subunit. Interacts with proteins S7 and S18. Binds to IF-3.

Its function is as follows. Located on the platform of the 30S subunit, it bridges several disparate RNA helices of the 16S rRNA. Forms part of the Shine-Dalgarno cleft in the 70S ribosome. In Thermoanaerobacter sp. (strain X514), this protein is Small ribosomal subunit protein uS11.